The primary structure comprises 726 residues: Biotin--protein ligase (726 aa).

The interval 28-98 (EVKDQVSNKQ…SDRGGGPVEH (71 aa)) is disordered. The span at 43-75 (PKPEPSLEIKPEQDGMEHVGRDDPKALGEEPKQ) shows a compositional bias: basic and acidic residues. Residues serine 147 and serine 299 each carry the phosphoserine modification. Positions 463-652 (KQLGKVILFA…VLEKLIKEFQ (190 aa)) constitute a BPL/LPL catalytic domain.

The protein belongs to the biotin--protein ligase family. As to quaternary structure, monomer. As to expression, widely expressed. Mostly expressed in muscle, placenta and to a lower extent in the brain, kidney, pancreas, liver and lung.

Its subcellular location is the cytoplasm. The protein resides in the mitochondrion. The enzyme catalyses apo-[methylmalonyl-CoA:pyruvate carboxytransferase] + biotin + ATP = holo-[methylmalonyl-CoA:pyruvate carboxytransferase] + AMP + diphosphate + H(+). It catalyses the reaction apo-[propionyl-CoA:carbon-dioxide ligase (ADP-forming)] + biotin + ATP = holo-[propionyl-CoA:carbon-dioxide ligase (ADP-forming)] + AMP + diphosphate + H(+). The catalysed reaction is apo-[3-methylcrotonoyl-CoA:carbon-dioxide ligase (ADP-forming)] + biotin + ATP = holo-[3-methylcrotonoyl-CoA:carbon-dioxide ligase (ADP-forming)] + AMP + diphosphate + H(+). It carries out the reaction biotin + L-lysyl-[protein] + ATP = N(6)-biotinyl-L-lysyl-[protein] + AMP + diphosphate + H(+). In terms of biological role, biotin--protein ligase catalyzing the biotinylation of the 4 biotin-dependent carboxylases acetyl-CoA-carboxylase, pyruvate carboxylase, propionyl-CoA carboxylase, and methylcrotonyl-CoA carboxylase. The protein is Biotin--protein ligase of Homo sapiens (Human).